A 179-amino-acid polypeptide reads, in one-letter code: NAD(P)H-quinone oxidoreductase subunit I, chloroplastic (179 aa).

2 4Fe-4S ferredoxin-type domains span residues 55-84 and 95-124; these read GRIHFEFDKCIACEVCVRVCPIDLPVVDWR and LNYSIDFGVCIFCGNCVEYCPTNCLSMTEE. Residues C64, C67, C70, C74, C104, C107, C110, and C114 each coordinate [4Fe-4S] cluster.

The protein belongs to the complex I 23 kDa subunit family. In terms of assembly, NDH is composed of at least 16 different subunits, 5 of which are encoded in the nucleus. It depends on [4Fe-4S] cluster as a cofactor.

Its subcellular location is the plastid. The protein resides in the chloroplast thylakoid membrane. The enzyme catalyses a plastoquinone + NADH + (n+1) H(+)(in) = a plastoquinol + NAD(+) + n H(+)(out). The catalysed reaction is a plastoquinone + NADPH + (n+1) H(+)(in) = a plastoquinol + NADP(+) + n H(+)(out). Functionally, NDH shuttles electrons from NAD(P)H:plastoquinone, via FMN and iron-sulfur (Fe-S) centers, to quinones in the photosynthetic chain and possibly in a chloroplast respiratory chain. The immediate electron acceptor for the enzyme in this species is believed to be plastoquinone. Couples the redox reaction to proton translocation, and thus conserves the redox energy in a proton gradient. This Acorus calamus (Sweet flag) protein is NAD(P)H-quinone oxidoreductase subunit I, chloroplastic.